The primary structure comprises 160 residues: MAKQKKHPTGTIAQNKKARHDYFIEHKFEAGLVLSGWEVKSLRAGKAHLTDSYVLLKDGEAWLFGSHITPLTTASTHVIADPIRSRKLLLNKRELERVEAAVAQKGYTCVALALYWSKHLIKCEIALGKGKKEFDKRDTVRERDSNRELQRAVRNKGKED.

The interval 136 to 160 (KRDTVRERDSNRELQRAVRNKGKED) is disordered.

It belongs to the SmpB family.

The protein localises to the cytoplasm. Its function is as follows. Required for rescue of stalled ribosomes mediated by trans-translation. Binds to transfer-messenger RNA (tmRNA), required for stable association of tmRNA with ribosomes. tmRNA and SmpB together mimic tRNA shape, replacing the anticodon stem-loop with SmpB. tmRNA is encoded by the ssrA gene; the 2 termini fold to resemble tRNA(Ala) and it encodes a 'tag peptide', a short internal open reading frame. During trans-translation Ala-aminoacylated tmRNA acts like a tRNA, entering the A-site of stalled ribosomes, displacing the stalled mRNA. The ribosome then switches to translate the ORF on the tmRNA; the nascent peptide is terminated with the 'tag peptide' encoded by the tmRNA and targeted for degradation. The ribosome is freed to recommence translation, which seems to be the essential function of trans-translation. The chain is SsrA-binding protein from Pseudomonas putida (strain W619).